The sequence spans 767 residues: Probable NADP-dependent malic enzyme (767 aa).

The interval 1 to 430 (MDEMNKINYT…QLGSRLNPTA (430 aa)) is malic enzyme. Tyr-42 functions as the Proton donor in the catalytic mechanism. The Proton acceptor role is filled by Lys-97. A divalent metal cation-binding residues include Glu-139, Asp-140, and Asp-165. NADP(+)-binding positions include 198–201 (AGAA), Asn-290, and Asn-322. The segment at 431 to 767 (NYMNFLAEKI…FACVEAIKEV (337 aa)) is phosphate acetyltransferase.

The protein in the N-terminal section; belongs to the malic enzymes family. It in the C-terminal section; belongs to the phosphate acetyltransferase and butyryltransferase family. Requires Mg(2+) as cofactor. The cofactor is Mn(2+).

It carries out the reaction (S)-malate + NADP(+) = pyruvate + CO2 + NADPH. The catalysed reaction is oxaloacetate + H(+) = pyruvate + CO2. In Rickettsia prowazekii (strain Madrid E), this protein is Probable NADP-dependent malic enzyme.